The chain runs to 182 residues: Orotate phosphoribosyltransferase (182 aa).

5-phospho-alpha-D-ribose 1-diphosphate contacts are provided by residues Arg-93, Lys-94, Lys-97, and 119–127 (EDIATTGTS). 2 residues coordinate orotate: Thr-123 and Arg-151.

Belongs to the purine/pyrimidine phosphoribosyltransferase family. PyrE subfamily. As to quaternary structure, homodimer. Mg(2+) is required as a cofactor.

The enzyme catalyses orotidine 5'-phosphate + diphosphate = orotate + 5-phospho-alpha-D-ribose 1-diphosphate. It functions in the pathway pyrimidine metabolism; UMP biosynthesis via de novo pathway; UMP from orotate: step 1/2. Catalyzes the transfer of a ribosyl phosphate group from 5-phosphoribose 1-diphosphate to orotate, leading to the formation of orotidine monophosphate (OMP). This is Orotate phosphoribosyltransferase from Haloquadratum walsbyi (strain DSM 16790 / HBSQ001).